A 333-amino-acid polypeptide reads, in one-letter code: Bifunctional phosphoglucose/phosphomannose isomerase (333 aa).

The 139-residue stretch at 22–160 (LEGALEGVEE…SGALGVDLEA (139 aa)) folds into the SIS domain. Residues glycine 39, serine 40, serine 84, serine 86, threonine 89, and arginine 136 each coordinate D-fructose 6-phosphate. The active-site Proton acceptor is glutamate 211. 2 residues coordinate D-fructose 6-phosphate: histidine 227 and lysine 322. Catalysis depends on histidine 227, which acts as the Proton donor. The active-site Proton acceptor is lysine 322.

Belongs to the PGI/PMI family. As to quaternary structure, homodimer.

It carries out the reaction alpha-D-glucose 6-phosphate = beta-D-fructose 6-phosphate. The enzyme catalyses D-mannose 6-phosphate = D-fructose 6-phosphate. Its activity is regulated as follows. Inhibited by low concentrations of erythrose 4-phosphate and 6-phosphogluconate. Functionally, dual specificity isomerase that catalyzes the isomerization of both glucose-6-phosphate and mannose-6-phosphate to fructose-6-phosphate with similar catalytic efficiency. The protein is Bifunctional phosphoglucose/phosphomannose isomerase of Aeropyrum pernix (strain ATCC 700893 / DSM 11879 / JCM 9820 / NBRC 100138 / K1).